We begin with the raw amino-acid sequence, 279 residues long: MKTTASFKKMKQQKEKIAMMTAYDAPSARLVEDADVDMILVGDSLGMVVLGYDSTIPVTLDDMIHHTKAVKRGAKNTFIVTDMPYLTYHGSFNETLVGAKRLMQEAGADALKLEGNGDIIDTIERLTLAGVPIVAHLGLTPQNVAVEGGYRVQAKDAKSAKQLLADAKAVEAAGAFALVLECVPEQVATQISEELTIPVIGIGAGAGCDGQVLVYHDVIGYGAGHVPSFVKQYVNITKPIEEAMKQYVQEVKAGTFPDKDHAFSLKENVIQELYGGALT.

Mg(2+)-binding residues include Asp43 and Asp82. 3-methyl-2-oxobutanoate is bound by residues 43–44 (DS), Asp82, and Lys112. Position 114 (Glu114) interacts with Mg(2+). Residue Glu181 is the Proton acceptor of the active site.

It belongs to the PanB family. Homodecamer; pentamer of dimers. It depends on Mg(2+) as a cofactor.

It is found in the cytoplasm. The enzyme catalyses 3-methyl-2-oxobutanoate + (6R)-5,10-methylene-5,6,7,8-tetrahydrofolate + H2O = 2-dehydropantoate + (6S)-5,6,7,8-tetrahydrofolate. Its pathway is cofactor biosynthesis; (R)-pantothenate biosynthesis; (R)-pantoate from 3-methyl-2-oxobutanoate: step 1/2. Functionally, catalyzes the reversible reaction in which hydroxymethyl group from 5,10-methylenetetrahydrofolate is transferred onto alpha-ketoisovalerate to form ketopantoate. This is 3-methyl-2-oxobutanoate hydroxymethyltransferase from Halalkalibacterium halodurans (strain ATCC BAA-125 / DSM 18197 / FERM 7344 / JCM 9153 / C-125) (Bacillus halodurans).